The following is a 144-amino-acid chain: Small ribosomal subunit protein bS6 (144 aa).

Positions 97–144 (DTEQSLIMKSKDEKGDKPERSERRRRDDEEGDAAPAATDTDGDNAEAA) are disordered. A compositionally biased stretch (basic and acidic residues) spans 105 to 124 (KSKDEKGDKPERSERRRRDD).

This sequence belongs to the bacterial ribosomal protein bS6 family.

Functionally, binds together with bS18 to 16S ribosomal RNA. The sequence is that of Small ribosomal subunit protein bS6 from Xanthomonas campestris pv. campestris (strain 8004).